The primary structure comprises 74 residues: Protein SlyX homolog (74 aa).

It belongs to the SlyX family.

This chain is Protein SlyX homolog, found in Neisseria meningitidis serogroup C (strain 053442).